A 251-amino-acid polypeptide reads, in one-letter code: MQDDQKKTTDFGFKEIPTDEKVKAVAQVFHSVAAKYDIMNDLMSGGIHRLWKRHTISQSGVRAGNCVLDIAGGTGDLTVKFSRLVGSEGQVILADINDSMLKVGRDKLANQGIVGNVKFVQANAEALPFPDDTFDCITIAFGLRNVTDKSKALASMYRVLKPGGRLLVLEFSKPESELLSQVYDQYSFRLLPAMGKLIANDADSYRYLAESIRMHPDQETLKGMMDEVGFERTSYQNLTGGIVALHKGFKF.

S-adenosyl-L-methionine-binding positions include T74, D95, and 123 to 124 (NA).

This sequence belongs to the class I-like SAM-binding methyltransferase superfamily. MenG/UbiE family.

The enzyme catalyses a 2-demethylmenaquinol + S-adenosyl-L-methionine = a menaquinol + S-adenosyl-L-homocysteine + H(+). It catalyses the reaction a 2-methoxy-6-(all-trans-polyprenyl)benzene-1,4-diol + S-adenosyl-L-methionine = a 5-methoxy-2-methyl-3-(all-trans-polyprenyl)benzene-1,4-diol + S-adenosyl-L-homocysteine + H(+). It participates in quinol/quinone metabolism; menaquinone biosynthesis; menaquinol from 1,4-dihydroxy-2-naphthoate: step 2/2. It functions in the pathway cofactor biosynthesis; ubiquinone biosynthesis. Functionally, methyltransferase required for the conversion of demethylmenaquinol (DMKH2) to menaquinol (MKH2) and the conversion of 2-polyprenyl-6-methoxy-1,4-benzoquinol (DDMQH2) to 2-polyprenyl-3-methyl-6-methoxy-1,4-benzoquinol (DMQH2). The sequence is that of Ubiquinone/menaquinone biosynthesis C-methyltransferase UbiE from Marinomonas sp. (strain MWYL1).